We begin with the raw amino-acid sequence, 865 residues long: Envelope glycoprotein gp160 (865 aa).

The first 31 residues, 1–31, serve as a signal peptide directing secretion; the sequence is MRVMEMRKNCQHLWKWGTMLLGMLMICSAAE. Residues 32–693 lie on the Extracellular side of the membrane; sequence DLWVTVYYGV…ITQWLWYIRI (662 aa). A disulfide bond links Cys-53 and Cys-73. Asn-87, Asn-129, Asn-136, Asn-139, Asn-156, Asn-193, Asn-194, Asn-197, Asn-198, Asn-203, Asn-210, Asn-247, Asn-254, Asn-275, Asn-289, Asn-302, Asn-308, Asn-314, Asn-344, Asn-351, and Asn-367 each carry an N-linked (GlcNAc...) asparagine; by host glycan. 5 disulfides stabilise this stretch: Cys-118/Cys-218, Cys-125/Cys-209, Cys-130/Cys-157, Cys-231/Cys-260, and Cys-241/Cys-252. The tract at residues 130 to 156 is V1; it reads CTDANLNGTNVTSSSGGTMMENGEIKN. A V2 region spans residues 157 to 209; sequence CSFQVTTSRRDKTQKKYALFYKLDVVPIEKGNISPKNNTSNNTSYGNYTLIHC. The V3 stretch occupies residues 309-342; that stretch reads CTRPNNNTRKSITKGPGRVIYATGQIIGDIRKAH. Cysteines 309 and 343 form a disulfide. Positions 375 to 385 are CD4-binding loop; the sequence is SSGGDPEIVLH. Cystine bridges form between Cys-389–Cys-452 and Cys-396–Cys-425. Residues 396-425 are V4; the sequence is CNTTQLFNSTWNSTEGSNNTGGNDTITLPC. N-linked (GlcNAc...) asparagine; by host glycans are attached at residues Asn-397, Asn-403, Asn-407, Asn-413, Asn-418, Asn-455, and Asn-471. V5 stretches follow at residues 468 to 479 and 470 to 479; these read DTTNTTEIFRLG and TNTTEIFRLG. The fusion peptide stretch occupies residues 520–541; that stretch reads AVGTIGAMFLGFLGAAGSTMGA. Residues 583–601 are immunosuppression; that stretch reads KQLQARVLAVERYLRDQQL. An intrachain disulfide couples Cys-607 to Cys-613. 4 N-linked (GlcNAc...) asparagine; by host glycosylation sites follow: Asn-620, Asn-625, Asn-634, and Asn-646. Positions 642 to 676 form a coiled coil; the sequence is REIDNYTGIIYNLLEESQNQQEKNEQELLELDKWA. Residues 671 to 692 are MPER; binding to GalCer; it reads ELDKWANLWNWFDITQWLWYIR. A helical transmembrane segment spans residues 694 to 714; sequence FIMIVGGLVGLKIVFAVLSIV. The Cytoplasmic segment spans residues 715–865; the sequence is NRVRQGYSPL…IRQGLERALL (151 aa). The YXXL motif; contains endocytosis signal motif lies at 721–724; that stretch reads YSPL. A disordered region spans residues 728–754; sequence THLPAPRGPDRPEGIEGEGGERDRDRS. Residues 735 to 754 are compositionally biased toward basic and acidic residues; it reads GPDRPEGIEGEGGERDRDRS. Cys-773 carries the S-palmitoyl cysteine; by host lipid modification. A Di-leucine internalization motif motif is present at residues 864 to 865; that stretch reads LL.

It belongs to the HIV-1 env protein family. In terms of assembly, the mature envelope protein (Env) consists of a homotrimer of non-covalently associated gp120-gp41 heterodimers. The resulting complex protrudes from the virus surface as a spike. There seems to be as few as 10 spikes on the average virion. Interacts with host CD4, CCR5 and CXCR4. Gp120 also interacts with the C-type lectins CD209/DC-SIGN and CLEC4M/DC-SIGNR (collectively referred to as DC-SIGN(R)). Gp120 and gp41 interact with GalCer. Gp120 interacts with host ITGA4/ITGB7 complex; on CD4+ T-cells, this interaction results in rapid activation of integrin ITGAL/LFA-1, which facilitates efficient cell-to-cell spreading of HIV-1. Gp120 interacts with cell-associated heparan sulfate; this interaction increases virus infectivity on permissive cells and may be involved in infection of CD4- cells. As to quaternary structure, the mature envelope protein (Env) consists of a homotrimer of non-covalently associated gp120-gp41 heterodimers. The resulting complex protrudes from the virus surface as a spike. There seems to be as few as 10 spikes on the average virion. Highly glycosylated by host. The high number of glycan on the protein is reffered to as 'glycan shield' because it contributes to hide protein sequence from adaptive immune system. Post-translationally, palmitoylation of the transmembrane protein and of Env polyprotein (prior to its proteolytic cleavage) is essential for their association with host cell membrane lipid rafts. Palmitoylation is therefore required for envelope trafficking to classical lipid rafts, but not for viral replication. In terms of processing, specific enzymatic cleavages in vivo yield mature proteins. Envelope glycoproteins are synthesized as an inactive precursor that is heavily N-glycosylated and processed likely by host cell furin in the Golgi to yield the mature SU and TM proteins. The cleavage site between SU and TM requires the minimal sequence [KR]-X-[KR]-R. About 2 of the 9 disulfide bonds of gp41 are reduced by P4HB/PDI, following binding to CD4 receptor.

Its subcellular location is the virion membrane. The protein resides in the host cell membrane. The protein localises to the host endosome membrane. Its function is as follows. Oligomerizes in the host endoplasmic reticulum into predominantly trimers. In a second time, gp160 transits in the host Golgi, where glycosylation is completed. The precursor is then proteolytically cleaved in the trans-Golgi and thereby activated by cellular furin or furin-like proteases to produce gp120 and gp41. In terms of biological role, attaches the virus to the host lymphoid cell by binding to the primary receptor CD4. This interaction induces a structural rearrangement creating a high affinity binding site for a chemokine coreceptor like CXCR4 and/or CCR5. Acts as a ligand for CD209/DC-SIGN and CLEC4M/DC-SIGNR, which are respectively found on dendritic cells (DCs), and on endothelial cells of liver sinusoids and lymph node sinuses. These interactions allow capture of viral particles at mucosal surfaces by these cells and subsequent transmission to permissive cells. HIV subverts the migration properties of dendritic cells to gain access to CD4+ T-cells in lymph nodes. Virus transmission to permissive T-cells occurs either in trans (without DCs infection, through viral capture and transmission), or in cis (following DCs productive infection, through the usual CD4-gp120 interaction), thereby inducing a robust infection. In trans infection, bound virions remain infectious over days and it is proposed that they are not degraded, but protected in non-lysosomal acidic organelles within the DCs close to the cell membrane thus contributing to the viral infectious potential during DCs' migration from the periphery to the lymphoid tissues. On arrival at lymphoid tissues, intact virions recycle back to DCs' cell surface allowing virus transmission to CD4+ T-cells. Acts as a class I viral fusion protein. Under the current model, the protein has at least 3 conformational states: pre-fusion native state, pre-hairpin intermediate state, and post-fusion hairpin state. During fusion of viral and target intracellular membranes, the coiled coil regions (heptad repeats) assume a trimer-of-hairpins structure, positioning the fusion peptide in close proximity to the C-terminal region of the ectodomain. The formation of this structure appears to drive apposition and subsequent fusion of viral and target cell membranes. Complete fusion occurs in host cell endosomes and is dynamin-dependent, however some lipid transfer might occur at the plasma membrane. The virus undergoes clathrin-dependent internalization long before endosomal fusion, thus minimizing the surface exposure of conserved viral epitopes during fusion and reducing the efficacy of inhibitors targeting these epitopes. Membranes fusion leads to delivery of the nucleocapsid into the cytoplasm. This is Envelope glycoprotein gp160 from Homo sapiens (Human).